The following is a 191-amino-acid chain: Inosine triphosphate pyrophosphatase (191 aa).

An ITP-binding site is contributed by 9 to 14 (TGNAKK). Glutamate 39 lines the Mg(2+) pocket. Residues lysine 51, 67 to 68 (DT), lysine 84, 143 to 146 (FGWD), lysine 166, and 171 to 172 (HR) each bind ITP.

Belongs to the HAM1 NTPase family. As to quaternary structure, homodimer. Requires Mg(2+) as cofactor. The cofactor is Mn(2+).

It localises to the cytoplasm. The enzyme catalyses ITP + H2O = IMP + diphosphate + H(+). It catalyses the reaction dITP + H2O = dIMP + diphosphate + H(+). It carries out the reaction XTP + H2O = XMP + diphosphate + H(+). In terms of biological role, pyrophosphatase that hydrolyzes non-canonical purine nucleotides such as inosine triphosphate (ITP), deoxyinosine triphosphate (dITP) or xanthosine 5'-triphosphate (XTP) to their respective monophosphate derivatives. The enzyme does not distinguish between the deoxy- and ribose forms. Probably excludes non-canonical purines from RNA and DNA precursor pools, thus preventing their incorporation into RNA and DNA and avoiding chromosomal lesions. The polypeptide is Inosine triphosphate pyrophosphatase (Drosophila melanogaster (Fruit fly)).